We begin with the raw amino-acid sequence, 409 residues long: Phosphatidylserine decarboxylase proenzyme, mitochondrial (409 aa).

The N-terminal 52 residues, methionine 1–lysine 52, are a transit peptide targeting the mitochondrion. A necessary for localization to both lipid droplets and mitochondria region spans residues glutamine 36–alanine 103. The Mitochondrial matrix segment spans residues isoleucine 53–leucine 63. A helical transmembrane segment spans residues leucine 64–glutamine 82. Over tyrosine 83–leucine 409 the chain is Mitochondrial intermembrane. Catalysis depends on charge relay system; for autoendoproteolytic cleavage activity residues aspartate 191, histidine 267, and serine 378. Residue serine 378 is the Schiff-base intermediate with substrate; via pyruvic acid; for decarboxylase activity of the active site. Pyruvic acid (Ser); by autocatalysis is present on serine 378.

This sequence belongs to the phosphatidylserine decarboxylase family. PSD-B subfamily. Eukaryotic type I sub-subfamily. As to quaternary structure, heterodimer of a large membrane-associated beta subunit and a small pyruvoyl-containing alpha subunit. It depends on pyruvate as a cofactor. In terms of processing, is synthesized initially as an inactive proenzyme. Formation of the active enzyme involves a self-maturation process in which the active site pyruvoyl group is generated from an internal serine residue via an autocatalytic post-translational modification. Two non-identical subunits are generated from the proenzyme in this reaction, and the pyruvate is formed at the N-terminus of the alpha chain, which is derived from the carboxyl end of the proenzyme. The autoendoproteolytic cleavage occurs by a canonical serine protease mechanism, in which the side chain hydroxyl group of the serine supplies its oxygen atom to form the C-terminus of the beta chain, while the remainder of the serine residue undergoes an oxidative deamination to produce ammonia and the pyruvoyl prosthetic group on the alpha chain. During this reaction, the Ser that is part of the protease active site of the proenzyme becomes the pyruvoyl prosthetic group, which constitutes an essential element of the active site of the mature decarboxylase.

It is found in the mitochondrion inner membrane. The protein resides in the cytoplasm. Its subcellular location is the lipid droplet. It carries out the reaction a 1,2-diacyl-sn-glycero-3-phospho-L-serine + H(+) = a 1,2-diacyl-sn-glycero-3-phosphoethanolamine + CO2. The protein operates within phospholipid metabolism; phosphatidylethanolamine biosynthesis. In terms of biological role, catalyzes the formation of phosphatidylethanolamine (PtdEtn) from phosphatidylserine (PtdSer). Plays a central role in phospholipid metabolism and in the interorganelle trafficking of phosphatidylserine. May be involved in lipid droplet biogenesis at the endoplasmic reticulum membrane. This chain is Phosphatidylserine decarboxylase proenzyme, mitochondrial, found in Homo sapiens (Human).